A 23-amino-acid chain; its full sequence is Cysteine-rich venom protein 24 (23 aa).

The tract at residues 1–23 is disordered; that stretch reads VDFASESXNKRENQQIVDKHNAL. A compositionally biased stretch (basic and acidic residues) spans 8–23; the sequence is XNKRENQQIVDKHNAL.

Belongs to the CRISP family. Post-translationally, contains 8 disulfide bonds. Expressed by the venom gland.

Its subcellular location is the secreted. In Naja kaouthia (Monocled cobra), this protein is Cysteine-rich venom protein 24.